Reading from the N-terminus, the 63-residue chain is Alpha-conotoxin-like PuSG1.2 (63 aa).

Residues 1 to 21 (MRCLALLVVTLLLFTATATTG) form the signal peptide. The propeptide occupies 22–43 (ASNGMNAAASGEAPDSISLAVR). 2 cysteine pairs are disulfide-bonded: Cys46–Cys52 and Cys47–Cys60. A lacks the Ser-Xaa-Pro motif that is crucial for potent interaction with nAChR region spans residues 48–50 (PDP).

It belongs to the conotoxin A superfamily. Expressed by the salivary gland.

The protein resides in the secreted. In terms of biological role, alpha-conopeptides-like may act on postsynaptic membranes, they bind to the nicotinic acetylcholine receptors (nAChR) and thus inhibit them. Has possibly a distinct nAChR binding mode from other alpha-conotoxins, due to a different three residue motif (lacks the Ser-Xaa-Pro motif). This is Alpha-conotoxin-like PuSG1.2 from Conus pulicarius (Flea-bitten cone).